Consider the following 503-residue polypeptide: Zinc metalloproteinase nas-14 (503 aa).

The signal sequence occupies residues 1–25 (MRLLYSLFHCSAFLVGFTLSVGVLP). In terms of domain architecture, Peptidase M12A spans 116-312 (NLVTYPDKLW…KKVNKLYQCG (197 aa)). Disulfide bonds link Cys158-Cys311 and Cys182-Cys202. Residue Asn192 is glycosylated (N-linked (GlcNAc...) asparagine). Position 210 (His210) interacts with Zn(2+). Glu211 is an active-site residue. The Zn(2+) site is built by His214 and His220. Positions 317-340 (TSSTTTTTTTTTTTTTTEEPTTTT) are enriched in low complexity. The interval 317–377 (TSSTTTTTTT…TPKPVERSRN (61 aa)) is disordered. Over residues 342–351 (VEEKPKDKKV) the composition is skewed to basic and acidic residues. The segment covering 352-370 (SSTTTTTKKPTTTTTTTPK) has biased composition (low complexity). 3 cysteine pairs are disulfide-bonded: Cys380–Cys414, Cys387–Cys407, and Cys396–Cys411. The ShKT 1 domain occupies 380-414 (CEDLNAHCGMWEQLGHCQHSVKYMAHYCRKACNLC). The tract at residues 422 to 464 (TTTTPKPVPRNKEKENKSASSTTRGTSTATSTTPKTTTTTTSA) is disordered. Asn437 carries an N-linked (GlcNAc...) asparagine glycan. The span at 439-464 (SASSTTRGTSTATSTTPKTTTTTTSA) shows a compositional bias: low complexity. 3 disulfides stabilise this stretch: Cys469–Cys503, Cys476–Cys496, and Cys485–Cys500. A ShKT 2 domain is found at 469–503 (CEDKNLFCSYWAKIGECNSESKFMKIFCKASCGKC).

Zn(2+) is required as a cofactor. As to expression, expressed in pharyngeal muscles and mc cells.

It is found in the secreted. Functionally, metalloprotease. The sequence is that of Zinc metalloproteinase nas-14 (nas-14) from Caenorhabditis elegans.